An 89-amino-acid polypeptide reads, in one-letter code: Envelope protein US9 (89 aa).

Positions 1–10 (MTSRPADQDS) are enriched in basic and acidic residues. The disordered stretch occupies residues 1-21 (MTSRPADQDSVRSSASVPLYP). The Intravirion segment spans residues 1–66 (MTSRPADQDS…RRRRTRCVGL (66 aa)). The Internalization motif motif lies at 20–23 (YPAA). An acidic region spans residues 29 to 38 (EAYYSESEDE). Phosphoserine; by host CK2 is present on residues serine 33 and serine 35. Residues 67–87 (VIACLVVALLSGGFGALLVWL) form a helical; Signal-anchor for type II membrane protein membrane-spanning segment. Residues 88–89 (LR) are Virion surface-facing.

It belongs to the alphaherpesvirinae envelope protein US9 family. Phosphorylated on serines within the acidic cluster, possibly by host CK2. Phosphorylation determines whether endocytosed viral US9 traffics to the trans-Golgi network or recycles to the cell membrane.

The protein localises to the virion membrane. Its subcellular location is the host Golgi apparatus membrane. The protein resides in the host smooth endoplasmic reticulum membrane. It is found in the host cell membrane. Functionally, essential for the anterograde spread of the infection throughout the host nervous system. Together with the gE/gI heterodimer, US9 is involved in the sorting and transport of viral structural components toward axon tips. The chain is Envelope protein US9 from Homo sapiens (Human).